The sequence spans 266 residues: Glutamate racemase (266 aa).

Residues Asp-9–Ser-10 and Tyr-41–Gly-42 contribute to the substrate site. The active-site Proton donor/acceptor is Cys-73. Residue Asn-74–Thr-75 coordinates substrate. The Proton donor/acceptor role is filled by Cys-183. Thr-184–His-185 contributes to the substrate binding site.

Belongs to the aspartate/glutamate racemases family.

The enzyme catalyses L-glutamate = D-glutamate. The protein operates within cell wall biogenesis; peptidoglycan biosynthesis. Functionally, provides the (R)-glutamate required for cell wall biosynthesis. In Shewanella woodyi (strain ATCC 51908 / MS32), this protein is Glutamate racemase.